A 107-amino-acid chain; its full sequence is Inner membrane protein YiaW (107 aa).

Residues M1–F6 are Cytoplasmic-facing. Residues A7 to P29 form a helical membrane-spanning segment. The Periplasmic portion of the chain corresponds to Y30 to A43. A helical transmembrane segment spans residues I44–A66. The Cytoplasmic segment spans residues T67–E107.

To E.coli YibI.

Its subcellular location is the cell inner membrane. This is Inner membrane protein YiaW (yiaW) from Escherichia coli O157:H7.